The chain runs to 217 residues: GTP cyclohydrolase 1 (217 aa).

Cysteine 108, histidine 111, and cysteine 179 together coordinate Zn(2+).

Belongs to the GTP cyclohydrolase I family. As to quaternary structure, toroid-shaped homodecamer, composed of two pentamers of five dimers.

It carries out the reaction GTP + H2O = 7,8-dihydroneopterin 3'-triphosphate + formate + H(+). It participates in cofactor biosynthesis; 7,8-dihydroneopterin triphosphate biosynthesis; 7,8-dihydroneopterin triphosphate from GTP: step 1/1. The polypeptide is GTP cyclohydrolase 1 (Shewanella denitrificans (strain OS217 / ATCC BAA-1090 / DSM 15013)).